The sequence spans 323 residues: Acetyl esterase (323 aa).

An Involved in the stabilization of the negatively charged intermediate by the formation of the oxyanion hole motif is present at residues 91–93 (HGG). Residues Ser-165, Asp-262, and His-292 contribute to the active site.

The protein belongs to the 'GDXG' lipolytic enzyme family. In terms of assembly, homodimer. Interacts with MalT and MelA.

It localises to the cytoplasm. Functionally, displays esterase activity towards short chain fatty esters (acyl chain length of up to 8 carbons). Able to hydrolyze triacetylglycerol (triacetin) and tributyrylglycerol (tributyrin), but not trioleylglycerol (triolein) or cholesterol oleate. Negatively regulates MalT activity by antagonizing maltotriose binding. Inhibits MelA galactosidase activity. The sequence is that of Acetyl esterase from Salmonella paratyphi A (strain AKU_12601).